Reading from the N-terminus, the 417-residue chain is Multifunctional CCA protein (417 aa).

ATP-binding residues include glycine 8 and arginine 11. 2 residues coordinate CTP: glycine 8 and arginine 11. Mg(2+) contacts are provided by aspartate 21 and aspartate 23. Positions 91, 143, and 146 each coordinate ATP. CTP is bound by residues arginine 91, arginine 143, and arginine 146. The HD domain occupies 232–333; sequence TGVHVMMVVD…VRLFERSDAL (102 aa).

Belongs to the tRNA nucleotidyltransferase/poly(A) polymerase family. Bacterial CCA-adding enzyme type 1 subfamily. As to quaternary structure, monomer. Can also form homodimers and oligomers. Mg(2+) is required as a cofactor. Requires Ni(2+) as cofactor.

It carries out the reaction a tRNA precursor + 2 CTP + ATP = a tRNA with a 3' CCA end + 3 diphosphate. The enzyme catalyses a tRNA with a 3' CCA end + 2 CTP + ATP = a tRNA with a 3' CCACCA end + 3 diphosphate. In terms of biological role, catalyzes the addition and repair of the essential 3'-terminal CCA sequence in tRNAs without using a nucleic acid template. Adds these three nucleotides in the order of C, C, and A to the tRNA nucleotide-73, using CTP and ATP as substrates and producing inorganic pyrophosphate. tRNA 3'-terminal CCA addition is required both for tRNA processing and repair. Also involved in tRNA surveillance by mediating tandem CCA addition to generate a CCACCA at the 3' terminus of unstable tRNAs. While stable tRNAs receive only 3'-terminal CCA, unstable tRNAs are marked with CCACCA and rapidly degraded. This Paraburkholderia phymatum (strain DSM 17167 / CIP 108236 / LMG 21445 / STM815) (Burkholderia phymatum) protein is Multifunctional CCA protein.